The sequence spans 505 residues: Putative heat shock protein HSP 90-beta 4 (505 aa).

Residues N22, K83, and F109 each coordinate ATP. The segment at 197–248 (EKEISDDEEEKGEKEEEDKDDKEKPKTEDVGSDEEDDTDKNNKKKTKKIKEK) is disordered. A compositionally biased stretch (acidic residues) spans 200 to 216 (ISDDEEEKGEKEEEDKD).

Belongs to the heat shock protein 90 family. In terms of assembly, homodimer.

Its subcellular location is the cytoplasm. Its function is as follows. Putative molecular chaperone that may promote the maturation, structural maintenance and proper regulation of specific target proteins. The protein is Putative heat shock protein HSP 90-beta 4 (HSP90AB4P) of Homo sapiens (Human).